The primary structure comprises 478 residues: tRNA (adenine(58)-N(1))-methyltransferase non-catalytic subunit TRM6 (478 aa).

The segment at 456–478 (SENATAADSSEKLAEHGAKKQKI) is disordered. The segment covering 464–478 (SSEKLAEHGAKKQKI) has biased composition (basic and acidic residues).

This sequence belongs to the TRM6/GCD10 family. Heterotetramer; composed of two copies of TRM6/GCD10 and two copies of TRM61/GCD14.

It is found in the nucleus. Substrate-binding subunit of tRNA (adenine-N(1)-)-methyltransferase, which catalyzes the formation of N(1)-methyladenine at position 58 (m1A58) in initiator methionyl-tRNA. Also required for repression of GCN4 mRNA translation by the upstream open reading frames (uORFs) under conditions of amino acid sufficiency. This is tRNA (adenine(58)-N(1))-methyltransferase non-catalytic subunit TRM6 (GCD10) from Saccharomyces cerevisiae (strain ATCC 204508 / S288c) (Baker's yeast).